The sequence spans 873 residues: DNA mismatch repair protein PMS1 (873 aa).

The segment at 1–357 is DNA- and ATP-binding; sequence MTQIHQINDI…FKTTLSDYYN (357 aa). The span at 379–402 shows a compositional bias: basic and acidic residues; it reads LKTEVFDDRSTTHESDNENYHTAR. A disordered region spans residues 379-423; sequence LKTEVFDDRSTTHESDNENYHTARSESNQSNHAHFNSTTGVIDKS. Ser-393 is modified (phosphoserine). A compositionally biased stretch (polar residues) spans 403–423; the sequence is SESNQSNHAHFNSTTGVIDKS. Ser-566 bears the Phosphoserine mark. Residues 661 to 873 are interaction with MLH1; the sequence is YLTLTVSKND…WSSFSKDYEI (213 aa).

This sequence belongs to the DNA mismatch repair MutL/HexB family. Heterodimer of MLH1 and PMS1, called MutLalpha, which is the major MMR MutL activity correcting base-base mismatches as well as IDLs. The heterodimer binds double strand DNA independently of a mismatch with positive cooperativity and has more than one DNA binding site. Forms a ternary complex with either the MSH2-MSH6 (MutSalpha) or the MSH2-MSH3 heterodimer (MutSbeta), which recognize and bind to mismatch DNA. Ternary complex formation is promoted by ATP binding.

Its subcellular location is the nucleus. Functionally, required for DNA mismatch repair (MMR), correcting base-base mismatches and insertion-deletion loops (IDLs) resulting from DNA replication, DNA damage or from recombination events between non-identical sequences during meiosis. Component of the MutLalpha heterodimer that forms a ternary complex with the MutS heterodimers, which initially recognize the DNA mismatches. This complex is thought to be responsible for directing the downstream MMR events, including strand discrimination, excision, and resynthesis. Plays a major role in maintaining the genetic stability of simple sequence repeats and in the repair of heteroduplex sites present in meiotic recombination intermediates. The sequence is that of DNA mismatch repair protein PMS1 (PMS1) from Saccharomyces cerevisiae (strain ATCC 204508 / S288c) (Baker's yeast).